We begin with the raw amino-acid sequence, 452 residues long: Enolase (452 aa).

Residue Gln-167 participates in (2R)-2-phosphoglycerate binding. Glu-209 serves as the catalytic Proton donor. Residues Asp-250, Glu-307, and Asp-334 each coordinate Mg(2+). Positions 359, 388, 389, and 410 each coordinate (2R)-2-phosphoglycerate. Residue Lys-359 is the Proton acceptor of the active site.

This sequence belongs to the enolase family. It depends on Mg(2+) as a cofactor.

The protein localises to the cytoplasm. The protein resides in the secreted. It localises to the cell surface. The enzyme catalyses (2R)-2-phosphoglycerate = phosphoenolpyruvate + H2O. It participates in carbohydrate degradation; glycolysis; pyruvate from D-glyceraldehyde 3-phosphate: step 4/5. Functionally, catalyzes the reversible conversion of 2-phosphoglycerate (2-PG) into phosphoenolpyruvate (PEP). It is essential for the degradation of carbohydrates via glycolysis. The polypeptide is Enolase (Mesomycoplasma hyopneumoniae (strain 232) (Mycoplasma hyopneumoniae)).